Here is a 90-residue protein sequence, read N- to C-terminus: UPF0213 protein lmo0166 (90 aa).

The GIY-YIG domain occupies 5–80; it reads SEHFFYVLKC…KKLSRKNKDA (76 aa).

The protein belongs to the UPF0213 family.

The chain is UPF0213 protein lmo0166 from Listeria monocytogenes serovar 1/2a (strain ATCC BAA-679 / EGD-e).